Here is a 149-residue protein sequence, read N- to C-terminus: Large ribosomal subunit protein uL15 (149 aa).

The tract at residues Met-1 to Glu-52 is disordered.

Belongs to the universal ribosomal protein uL15 family. As to quaternary structure, part of the 50S ribosomal subunit.

In terms of biological role, binds to the 23S rRNA. The polypeptide is Large ribosomal subunit protein uL15 (Thermobifida fusca (strain YX)).